The chain runs to 327 residues: 7,8-didemethyl-8-hydroxy-5-deazariboflavin synthase (327 aa).

The 239-residue stretch at 6–244 folds into the Radical SAM core domain; the sequence is ITFSRNVFLP…EEVAVQVAPN (239 aa). Positions 20, 24, and 27 each coordinate [4Fe-4S] cluster.

This sequence belongs to the radical SAM superfamily. CofG family. As to quaternary structure, consists of two subunits, CofG and CofH. The cofactor is [4Fe-4S] cluster.

The enzyme catalyses 5-amino-5-(4-hydroxybenzyl)-6-(D-ribitylimino)-5,6-dihydrouracil + S-adenosyl-L-methionine = 7,8-didemethyl-8-hydroxy-5-deazariboflavin + 5'-deoxyadenosine + L-methionine + NH4(+) + H(+). It participates in cofactor biosynthesis; coenzyme F0 biosynthesis. In terms of biological role, catalyzes the radical-mediated synthesis of 7,8-didemethyl-8-hydroxy-5-deazariboflavin from 5-amino-5-(4-hydroxybenzyl)-6-(D-ribitylimino)-5,6-dihydrouracil. This is 7,8-didemethyl-8-hydroxy-5-deazariboflavin synthase from Methanosphaerula palustris (strain ATCC BAA-1556 / DSM 19958 / E1-9c).